A 274-amino-acid polypeptide reads, in one-letter code: uncharacterized protein (274 aa).

This is an uncharacterized protein from Caenorhabditis elegans.